A 470-amino-acid chain; its full sequence is ATP synthase subunit beta (470 aa).

156-163 (GGAGVGKT) is a binding site for ATP.

It belongs to the ATPase alpha/beta chains family. As to quaternary structure, F-type ATPases have 2 components, CF(1) - the catalytic core - and CF(0) - the membrane proton channel. CF(1) has five subunits: alpha(3), beta(3), gamma(1), delta(1), epsilon(1). CF(0) has three main subunits: a(1), b(2) and c(9-12). The alpha and beta chains form an alternating ring which encloses part of the gamma chain. CF(1) is attached to CF(0) by a central stalk formed by the gamma and epsilon chains, while a peripheral stalk is formed by the delta and b chains.

The protein localises to the cell inner membrane. The catalysed reaction is ATP + H2O + 4 H(+)(in) = ADP + phosphate + 5 H(+)(out). In terms of biological role, produces ATP from ADP in the presence of a proton gradient across the membrane. The catalytic sites are hosted primarily by the beta subunits. The protein is ATP synthase subunit beta of Nitratidesulfovibrio vulgaris (strain ATCC 29579 / DSM 644 / CCUG 34227 / NCIMB 8303 / VKM B-1760 / Hildenborough) (Desulfovibrio vulgaris).